Here is a 417-residue protein sequence, read N- to C-terminus: Testis-specific Y-encoded-like protein 5 (417 aa).

Basic residues predominate over residues Met1–Val25. Disordered regions lie at residues Met1–Ala55, Ala93–Leu112, Gly127–Met202, and Lys391–Asn417. Positions Pro27–Asp37 are enriched in basic and acidic residues. A compositionally biased stretch (low complexity) spans Ala93–Arg103. The span at Gly182 to Ala191 shows a compositional bias: basic and acidic residues. Residues Met406–Asn417 are compositionally biased toward polar residues.

Belongs to the nucleosome assembly protein (NAP) family. Interacts with USP7.

Involved in modulation of cell growth and cellular response to gamma radiation probably via regulation of the Akt signaling pathway. Involved in regulation of p53/TP53. Suppresses p53/TP53 protein levels and promotes its ubiquitination; the function is dependent on USP7 and independent on MDM2. Proposed to displace p53/TP53 from interaction with USP7. In Homo sapiens (Human), this protein is Testis-specific Y-encoded-like protein 5 (TSPYL5).